Here is a 177-residue protein sequence, read N- to C-terminus: MKKYTMNEMVDITKDMLNKRGVMIEDIARIVQKLQEKYNPNLPLSVCMENVEKVLNKREIIHAVLTGLALDQLAEQKLLPEPLQHLVETDEPLYGIDEIIPLSIVNVYGSIGLTNFGYLDKEKIGIIKELDESPDGIHTFLDDIVAALAAAAASRIAHTHQDLQDEEKEQDEKPVVS.

This sequence to B.subtilis YutG.

This is an uncharacterized protein from Bacillus subtilis (strain 168).